Reading from the N-terminus, the 230-residue chain is Orotidine 5'-phosphate decarboxylase (230 aa).

Substrate is bound by residues aspartate 11, lysine 34, 61–70, threonine 117, arginine 179, glutamine 188, glycine 208, and arginine 209; that span reads DLKLHDIPNT. The active-site Proton donor is lysine 63.

This sequence belongs to the OMP decarboxylase family. Type 1 subfamily. As to quaternary structure, homodimer.

It catalyses the reaction orotidine 5'-phosphate + H(+) = UMP + CO2. It participates in pyrimidine metabolism; UMP biosynthesis via de novo pathway; UMP from orotate: step 2/2. Its function is as follows. Catalyzes the decarboxylation of orotidine 5'-monophosphate (OMP) to uridine 5'-monophosphate (UMP). The sequence is that of Orotidine 5'-phosphate decarboxylase from Streptococcus mutans serotype c (strain ATCC 700610 / UA159).